A 345-amino-acid polypeptide reads, in one-letter code: Galacturonate transporter (345 aa).

The N-terminal stretch at 1-32 (MFKIKGLRWYMIGLVTIGTVLGYLTRNAIAAA) is a signal peptide. The next 8 membrane-spanning stretches (helical) occupy residues 49–69 (YIIAAYSACYTIMQPVAGYVL), 76–96 (VGYAMFAILWALFCAGTALAN), 100–120 (GLAVARGAVGMAEAAMIPAGL), 139–159 (FNVGSSIGGMLAPPLVVWAIM), 165–185 (MAFLITGALSLVWALCWLYFY), 237–257 (FLAEPAWGTFNAWIPLFMFKA), 265–285 (IAMFAWMPMLFADLGCILGGY), and 304–324 (LVVTLGALLMIGPGTIGLFTS).

This sequence belongs to the major facilitator superfamily. Phthalate permease family.

It localises to the cell inner membrane. The catalysed reaction is aldehydo-D-galacturonate(out) + H(+)(out) = aldehydo-D-galacturonate(in) + H(+)(in). Inhibited by cyanide and 2,4-dinitrophenol, but not by arsenate. Its function is as follows. Transport of D-galacturonate. Cannot transport the dimer digalacturonic acid. Uptake is an active process. The protein is Galacturonate transporter of Dickeya chrysanthemi (Pectobacterium chrysanthemi).